A 414-amino-acid polypeptide reads, in one-letter code: MDKRTTQFLKSRFQSYYKNAEIGLPDHLPNREWAFIFYDDMPEKMMHRHKSFGSPGEALDYLYGMAPAHVYNSTAYYEYPDAKKMNEKNWLGAELIFDLDADHLPNAPRNYADMLELVKKEALKLLDFLLDDFGFSEQEIQLVFSGGRGYHFHIVSPKVLTLGSSERREIVNYVSGRDLEFKYFFREVAMDGDFGTGSKTFKGMKNVPMKCTLVGYDSGWGRRIALYLTDYMKRESEKKYKKDMFPELRRHEKVGDTTIKKLINIANSETGLKDILEKGRLDFDVRNFKEIAAYFMQESAEDFLHRFGASVDEPVTADIKRLIRVPGSLHGGSGMLVKKLALSELEEFDPLNDAVVFGERPVKITASKPFSVQLKGKDLRIEEGIQEVPEYAAVYLICRGVAEYGHRRNQPDTV.

Active-site residues include Asp98, Asp100, and Asp312.

It belongs to the eukaryotic-type primase small subunit family. Heterodimer of a small subunit (PriS) and a large subunit (PriL). It depends on Mg(2+) as a cofactor. Mn(2+) is required as a cofactor.

Functionally, catalytic subunit of DNA primase, an RNA polymerase that catalyzes the synthesis of short RNA molecules used as primers for DNA polymerase during DNA replication. The small subunit contains the primase catalytic core and has DNA synthesis activity on its own. Binding to the large subunit stabilizes and modulates the activity, increasing the rate of DNA synthesis while decreasing the length of the DNA fragments, and conferring RNA synthesis capability. The DNA polymerase activity may enable DNA primase to also catalyze primer extension after primer synthesis. May also play a role in DNA repair. This chain is DNA primase small subunit PriS, found in Methanosarcina acetivorans (strain ATCC 35395 / DSM 2834 / JCM 12185 / C2A).